The following is a 420-amino-acid chain: Protein Rv2184c (420 aa).

Belongs to the arsA ATPase family.

The sequence is that of Protein Rv2184c from Mycobacterium tuberculosis (strain ATCC 25618 / H37Rv).